Here is a 66-residue protein sequence, read N- to C-terminus: FMRFamide-like neuropeptides 24 (66 aa).

The signal sequence occupies residues 1-22 (MSRTSIILVLAIFVAIAAIAQC). A propeptide spanning residues 23–48 (RNIQYDVDEISPEAAFRYAQWGEIPH) is cleaved from the precursor. At F61 the chain carries Phenylalanine amide. Residues 65 to 66 (SV) constitute a propeptide that is removed on maturation.

Belongs to the FARP (FMRFamide related peptide) family.

It is found in the secreted. Its function is as follows. FMRFamides and FMRFamide-like peptides are neuropeptides. This is FMRFamide-like neuropeptides 24 from Caenorhabditis briggsae.